We begin with the raw amino-acid sequence, 113 residues long: Urease subunit beta (113 aa).

This sequence belongs to the urease beta subunit family. As to quaternary structure, heterotrimer of UreA (gamma), UreB (beta) and UreC (alpha) subunits. Three heterotrimers associate to form the active enzyme.

It localises to the cytoplasm. It catalyses the reaction urea + 2 H2O + H(+) = hydrogencarbonate + 2 NH4(+). Its pathway is nitrogen metabolism; urea degradation; CO(2) and NH(3) from urea (urease route): step 1/1. This is Urease subunit beta from Nitrosospira multiformis (strain ATCC 25196 / NCIMB 11849 / C 71).